The primary structure comprises 25 residues: Omega-conotoxin CVIB (25 aa).

3 disulfides stabilise this stretch: Cys1-Cys16, Cys8-Cys20, and Cys15-Cys25. Cys25 is modified (cysteine amide).

It belongs to the conotoxin O1 superfamily. In terms of tissue distribution, expressed by the venom duct.

The protein localises to the secreted. Functionally, omega-conotoxins act at presynaptic membranes, they bind and block voltage-gated calcium channels (Cav). This toxin blocks N-, P- and Q-type calcium channels. It shows high activities on Cav2.1/CACNA1A (IC(50)=11 nM) and Cav2.2/CACNA1B (IC(50)=7.7 nM). In addition, it shows a higher potency when Cav2.2/CACNA1B is only expressed with the ancillary subunit CACNB3 (IC(50)=1.6 nM) than on Cav2.2/CACNA1B expressed with the ancillary subunits CACNA2D1 and CACNB3 (IC(50)=12 nM). Both the Cav2.2/CACNA1B block by this toxin and the recovery are voltage-independent. It is noteworthy that ancillary subunits beta do not modulate recovery from this toxin block, since Cav2.2/CACNA1B expressed with either the ancillary subunit CACNB2a (isoform 2a) or with CACNB3 exhibits moderate recovery. This chain is Omega-conotoxin CVIB, found in Conus catus (Cat cone).